A 278-amino-acid chain; its full sequence is MTPLQSLFESLRGQNRKALMPFLTTGDPNIDTTEAVIAAARQAGADLCEVGVPYSDPIADGPVIQASYQRALDAGFKLQHVWDLGQRLTENPKVKAMPRVTMVSYSIIYRIGMAKYVDQAMQAGYCGAIVPDLLVEEAEDLSKICREKGFDLIQLVTPTTTRDRQCRIAELSSGFLYYVSVTGITGERTALPTNLVDNVGWLREQTELPICIGFGISGPETAAQLAPVSDGLIVGSAIVRRVADAVEKAKSSGADPVKTAAEEAGDFCHSLRQAIDAA.

Residues E49 and D60 each act as proton acceptor in the active site.

This sequence belongs to the TrpA family. Tetramer of two alpha and two beta chains.

It carries out the reaction (1S,2R)-1-C-(indol-3-yl)glycerol 3-phosphate + L-serine = D-glyceraldehyde 3-phosphate + L-tryptophan + H2O. It participates in amino-acid biosynthesis; L-tryptophan biosynthesis; L-tryptophan from chorismate: step 5/5. Its function is as follows. The alpha subunit is responsible for the aldol cleavage of indoleglycerol phosphate to indole and glyceraldehyde 3-phosphate. In Rhodopirellula baltica (strain DSM 10527 / NCIMB 13988 / SH1), this protein is Tryptophan synthase alpha chain.